Here is a 332-residue protein sequence, read N- to C-terminus: UDP-N-acetylenolpyruvoylglucosamine reductase (332 aa).

An FAD-binding PCMH-type domain is found at 45-243 (RAGGHAAYFY…LGTRIKTQPL (199 aa)). Residue Arg194 is part of the active site. Ser250 (proton donor) is an active-site residue. Glu320 is an active-site residue.

It belongs to the MurB family. FAD is required as a cofactor.

Its subcellular location is the cytoplasm. The enzyme catalyses UDP-N-acetyl-alpha-D-muramate + NADP(+) = UDP-N-acetyl-3-O-(1-carboxyvinyl)-alpha-D-glucosamine + NADPH + H(+). The protein operates within cell wall biogenesis; peptidoglycan biosynthesis. Functionally, cell wall formation. This Nitrosomonas eutropha (strain DSM 101675 / C91 / Nm57) protein is UDP-N-acetylenolpyruvoylglucosamine reductase.